A 613-amino-acid chain; its full sequence is Kelch-like protein 21 (613 aa).

The BTB domain occupies 38 to 105 (FDVTLCAEGK…CYTGRVTVTH (68 aa)). Residues 140–242 (CLEIQDFAEA…RRFYLLAHVE (103 aa)) form the BACK domain. Kelch repeat units lie at residues 289–337 (ILVV…ALGN), 338–384 (DIYV…VLKG), 386–424 (LYVVGSDSTERYDHTIDCWEALPPMPHPMDNCSTTACRG), 426–472 (LYAI…TLNG), 474–514 (IYFV…ALGG), and 515–562 (RLYV…SIFR).

In terms of assembly, component of the BCR(KLHL21) E3 ubiquitin ligase complex, at least composed of cul3, klhl21 and rbx1.

It localises to the cytoplasm. The protein localises to the cytoskeleton. Its subcellular location is the spindle. The protein operates within protein modification; protein ubiquitination. In terms of biological role, substrate-specific adapter of BCR (BTB-CUL3-RBX1) E3 ubiquitin-protein ligase complex required for efficient chromosome alignment and cytokinesis. The BCR(KLHL21) E3 ubiquitin ligase complex regulates localization of the chromosomal passenger complex (CPC) from chromosomes to the spindle midzone in anaphase and mediates the ubiquitination of AURKB. In Danio rerio (Zebrafish), this protein is Kelch-like protein 21 (klhl21).